The primary structure comprises 466 residues: Asparagine--tRNA ligase (466 aa).

This sequence belongs to the class-II aminoacyl-tRNA synthetase family. As to quaternary structure, homodimer.

It localises to the cytoplasm. It catalyses the reaction tRNA(Asn) + L-asparagine + ATP = L-asparaginyl-tRNA(Asn) + AMP + diphosphate + H(+). The chain is Asparagine--tRNA ligase from Shewanella halifaxensis (strain HAW-EB4).